We begin with the raw amino-acid sequence, 189 residues long: Cancer/testis antigen family 45 member A2 (189 aa).

This sequence belongs to the CT45 family. In terms of tissue distribution, testis specific. Expressed in cancer cell lines.

In Homo sapiens (Human), this protein is Cancer/testis antigen family 45 member A2.